The primary structure comprises 210 residues: Thymidylate kinase (210 aa).

Residue 9–16 (GLEGAGKS) participates in ATP binding.

The protein belongs to the thymidylate kinase family.

The catalysed reaction is dTMP + ATP = dTDP + ADP. Functionally, phosphorylation of dTMP to form dTDP in both de novo and salvage pathways of dTTP synthesis. In Aliivibrio fischeri (strain MJ11) (Vibrio fischeri), this protein is Thymidylate kinase.